A 368-amino-acid chain; its full sequence is POU domain, class 3, transcription factor 1 (368 aa).

A compositionally biased stretch (polar residues) spans 1-16; the sequence is MATTAQYIPRNNSLPS. Disordered regions lie at residues 1–28, 69–88, 100–134, and 147–193; these read MATT…DRMH, TDWT…ASVQ, SHLV…NGHQ, and SPQP…PSSD. Residues 79–88 show a composition bias toward basic and acidic residues; sequence QAEHNKASVQ. Over residues 105-134 the composition is skewed to polar residues; that stretch reads QPTQNSHHGSWAPTTTHHLSPLSPASNGHQ. Residues 155–170 show a composition bias toward basic and acidic residues; it reads GLRDPLHDDAGSHDNQ. In terms of domain architecture, POU-specific spans 187 to 261; it reads EDAPSSDDLE…LLNKWLEETD (75 aa). A DNA-binding region (homeobox) is located at residues 279–338; sequence KRKKRTSIEVGVKGALENHFLKCPKPSAHEITTLAGTLQLEKEVVRVWFCNRRQKEKRMT.

It belongs to the POU transcription factor family. Class-3 subfamily. Predominantly expressed in the embryonic and adult central nervous system.

It is found in the nucleus. In terms of biological role, transcription factor that may play important roles in patterning the embryonic brain. Could directly respond to the reception of the sonic hedgehog (shh) signal. The sequence is that of POU domain, class 3, transcription factor 1 (pou3f1) from Danio rerio (Zebrafish).